Consider the following 403-residue polypeptide: Imidazolonepropionase (403 aa).

Positions 69 and 71 each coordinate Fe(3+). His-69 and His-71 together coordinate Zn(2+). Arg-78, Tyr-141, and His-174 together coordinate 4-imidazolone-5-propanoate. N-formimidoyl-L-glutamate is bound at residue Tyr-141. Residue His-239 participates in Fe(3+) binding. His-239 is a binding site for Zn(2+). Gln-242 contributes to the 4-imidazolone-5-propanoate binding site. Position 314 (Asp-314) interacts with Fe(3+). A Zn(2+)-binding site is contributed by Asp-314. Positions 316 and 318 each coordinate N-formimidoyl-L-glutamate. Residue Ser-319 participates in 4-imidazolone-5-propanoate binding.

It belongs to the metallo-dependent hydrolases superfamily. HutI family. The cofactor is Zn(2+). Fe(3+) is required as a cofactor.

The protein resides in the cytoplasm. It catalyses the reaction 4-imidazolone-5-propanoate + H2O = N-formimidoyl-L-glutamate. It functions in the pathway amino-acid degradation; L-histidine degradation into L-glutamate; N-formimidoyl-L-glutamate from L-histidine: step 3/3. Catalyzes the hydrolytic cleavage of the carbon-nitrogen bond in imidazolone-5-propanoate to yield N-formimidoyl-L-glutamate. It is the third step in the universal histidine degradation pathway. This is Imidazolonepropionase from Legionella pneumophila (strain Lens).